We begin with the raw amino-acid sequence, 206 residues long: Small ribosomal subunit protein uS4 (206 aa).

The region spanning 96–159 is the S4 RNA-binding domain; sequence SRLDNVVYRM…KKQARIVEGL (64 aa).

It belongs to the universal ribosomal protein uS4 family. As to quaternary structure, part of the 30S ribosomal subunit. Contacts protein S5. The interaction surface between S4 and S5 is involved in control of translational fidelity.

In terms of biological role, one of the primary rRNA binding proteins, it binds directly to 16S rRNA where it nucleates assembly of the body of the 30S subunit. With S5 and S12 plays an important role in translational accuracy. This chain is Small ribosomal subunit protein uS4, found in Chromobacterium violaceum (strain ATCC 12472 / DSM 30191 / JCM 1249 / CCUG 213 / NBRC 12614 / NCIMB 9131 / NCTC 9757 / MK).